A 218-amino-acid polypeptide reads, in one-letter code: MSEHHNGTEASLSSEQRARAEMVKLGASFFQRGYATGSAGNLSLLLDDGTLLATPTGSCLGELDAERLSKVSLSGEWISGDKPSKEVSFHLSIYRNDPECKAIVHLHSTYLTALSCLEGLDTQDAIKPFTPYVVMRVGKVPVVPYYRPGDARLGEDLAKLASRYKAFLLANHGPVVTGKNLRAAADNMEELEETAKLIFILGDRKIRYLTADDIAELS.

E86 functions as the Proton acceptor in the catalytic mechanism. The Zn(2+) site is built by E86, H105, and H107. Y132 acts as the Proton donor in catalysis. H172 lines the Zn(2+) pocket.

It belongs to the aldolase class II family. AraD/FucA subfamily. Zn(2+) serves as cofactor.

It carries out the reaction 3-dehydro-4-O-phospho-D-erythronate + H(+) = dihydroxyacetone phosphate + CO2. The catalysed reaction is 3-dehydro-4-O-phospho-L-erythronate + H(+) = dihydroxyacetone phosphate + CO2. Its function is as follows. Catalyzes the decarboxylation of 3-oxo-tetronate 4-phosphate to dihydroxyacetone phosphate (DHAP) and CO(2). The sequence is that of 3-oxo-tetronate 4-phosphate decarboxylase from Pectobacterium atrosepticum (strain SCRI 1043 / ATCC BAA-672) (Erwinia carotovora subsp. atroseptica).